A 151-amino-acid chain; its full sequence is Small ribosomal subunit protein uS19 (151 aa).

This sequence belongs to the universal ribosomal protein uS19 family.

This Picea mariana (Black spruce) protein is Small ribosomal subunit protein uS19 (RPS15).